The chain runs to 367 residues: Polygalacturonase (367 aa).

The N-terminal stretch at 1-18 is a signal peptide; that stretch reads MRTSFVTMLALGAAAVSA. Cys-34 and Cys-49 are disulfide-bonded. PbH1 repeat units follow at residues 161–191, 192–213, 214–234, 243–264, and 272–294; these read ADRL…DVGS, STFI…AINS, GSNI…SIGS, VKDV…RVKT, and VSGV…VIEQ. Catalysis depends on Asp-206, which acts as the Proton donor. The cysteines at positions 208 and 224 are disulfide-linked. The active site involves His-228. N-linked (GlcNAc...) asparagine glycans are attached at residues Asn-318 and Asn-336. 2 disulfides stabilise this stretch: Cys-334-Cys-339 and Cys-358-Cys-367.

It belongs to the glycosyl hydrolase 28 family.

It is found in the secreted. It catalyses the reaction (1,4-alpha-D-galacturonosyl)n+m + H2O = (1,4-alpha-D-galacturonosyl)n + (1,4-alpha-D-galacturonosyl)m.. This chain is Polygalacturonase (PG1), found in Penicillium digitatum (Green mold).